The primary structure comprises 357 residues: MTNTNRRTITVYGATGAQGGPVVRSLLKNNAFKVRAITRKPESEAAKALADLGAEIVQGDGWKKEQMVAAFSGSWAAFVNTNSDDPCFWDANHPTEFDLGKIIIDGIIQAGTVKHLVYSSFVDTSSFTNGQAIIEAADEKSKIERYAASSGHFDTVCPLYQGWYMDVFRGQEYAHALGGFPYFEDEDKFRTLRLPRWGTHTDMPLPWISLEDDFGDIVHGIFLTPEDYNGRVVPTVSDIRTYPEMIDAFQSGMPSLFWFLVCRLTSVHALATGQKARYIPVTDWEAHFGDSHHGKESLAIFKFGKFTNGKYFGDEPISTDISATLKAKAAEAQGKDPSDRKLITLVEWFEKHVAPLL.

NADP(+) is bound by residues 13–18, 39–43, 60–61, 81–83, Lys-140, and 164–167; these read GATGAQ, RKPES, DG, TNS, and YMDV.

It belongs to the NmrA-type oxidoreductase family.

NmrA-like family domain-containing oxidoreductase; part of the gene cluster that mediates the biosynthesis of notoamide, a fungal indole alkaloid that belongs to a family of natural products containing a characteristic bicyclo[2.2.2]diazaoctane core. The first step of notoamide biosynthesis involves coupling of L-proline and L-tryptophan by the bimodular NRPS notE', to produce cyclo-L-tryptophan-L-proline called brevianamide F. The reverse prenyltransferase notF' then acts as a deoxybrevianamide E synthase and converts brevianamide F to deoxybrevianamide E via reverse prenylation at C-2 of the indole ring leading to the bicyclo[2.2.2]diazaoctane core. Deoxybrevianamide E is further hydroxylated at C-6 of the indole ring, likely catalyzed by the cytochrome P450 monooxygenase notG', to yield 6-hydroxy-deoxybrevianamide E. 6-hydroxy-deoxybrevianamide E is a specific substrate of the prenyltransferase notC' for normal prenylation at C-7 to produce 6-hydroxy-7-prenyl-deoxybrevianamide, also called notoamide S. As the proposed pivotal branching point in notoamide biosynthesis, notoamide S can be diverted to notoamide E through an oxidative pyran ring closure putatively catalyzed by either notH' cytochrome P450 monooxygenase or the notD' FAD-linked oxidoreductase. This step would be followed by an indole 2,3-epoxidation-initiated pinacol-like rearrangement catalyzed by the notB' FAD-dependent monooxygenase leading to the formation of notoamide C and notoamide D. On the other hand notoamide S is converted to notoamide T by notH' (or notD'), a bifunctional oxidase that also functions as the intramolecular Diels-Alderase responsible for generation of (-)-notoamide T. To generate antipodal (+)-notoaminide T, notH (or notD) in Aspergillus strain MF297-2 is expected to catalyze a Diels-Alder reaction leading to the opposite stereochemistry. The remaining oxidoreductase notD' (or notH') likely catalyzes the oxidative pyran ring formation to yield (-)-stephacidin A. The FAD-dependent monooxygenase notI' is highly similar to notB' and is predicted to catalyze a similar conversion from (-)-stephacidin A to (+)-notoamide B via the 2,3-epoxidation of (-)-stephacidin A followed by a pinacol-type rearrangement. Finally, it remains unclear which enzyme could be responsible for the final hydroxylation steps leading to notoamide A and sclerotiamide. In Aspergillus versicolor, this protein is NmrA-like family domain-containing oxidoreductase notA'.